A 135-amino-acid chain; its full sequence is Type 3 secretion system stator protein (135 aa).

This sequence belongs to the SctL stator family. In terms of assembly, the core secretion machinery of the T3SS is composed of approximately 20 different proteins, including cytoplasmic components, a base, an export apparatus and a needle. This subunit is part of the cytosolic complex.

It is found in the cytoplasm. Functionally, component of the type III secretion system (T3SS), also called injectisome, which is used to inject bacterial effector proteins into eukaryotic host cells. Acts as a regulator of the HrcN/SctN ATPase activity. This is Type 3 secretion system stator protein from Rhizobium fredii (Sinorhizobium fredii).